The chain runs to 22 residues: Short-chain-enoyl-CoA hydratase (22 aa).

The protein belongs to the enoyl-CoA hydratase/isomerase family.

The catalysed reaction is a short-chain (3S)-3-hydroxyacyl-CoA = a short-chain (2E)-enoyl-CoA + H2O. It participates in lipid metabolism; butanoate metabolism. This is Short-chain-enoyl-CoA hydratase (crt) from Clostridium pasteurianum.